The following is a 1031-amino-acid chain: MITSITLLFSILWAQILSWISISGPLILFGLYYGFSITLPMGPSQILSIRAFLLEGNLSGLMALGGSTLGQLIILISIFYSPLYIMLLKPHAITLITLPYVLFYWYEIKDLSDYQPLRPITSLNDTGIIQIFLNSFLFQIFNPILLPSPVLTRLVKLFLFRYSHNSFFVISLFCGWLGGNILLINLSKFLLIRIKNNSSTLYLLVKRLIYRTFSIIIFVACLSYLGKFPVPFSMKKSSDESSLNEWKAERLSWLYKPWPTSLFNYRKWNRPLRYIENSRFSNKSPVKRNVSQYFFDVCLNDGRQRISFTSLPSFSIFEKNLKNYLNVSRISSSSDVFYQEWINTKKEQKDDLYSEVEERIKALDNGFSLEHAIEKRIGFSSINKEDIPNKTYDPFLDGEFRGKVAVSQSPLLLTGKSYGLTKTQKLLHLSRKNNKLKFWISNKWRKLERKDLPLPWEPLTQDARRVLILLIKGLRNKKSKIDSQRNDFSKEQGVIALNEENISPEFSAKTNNTNFLREKAIRKSHINWELVLNLSLRQRILYFNYLEKVKWETIKNSWKDLISGNFTEVKNIGSLVMKIMKIHQESPLQEFHKEVPRWTSKLKNDKFDVIAIGVTDIRQRKVRNLGYLIKGREKRRKIVRRFSQQSDFRRKLIKGSMRARRRKTLIWKILQFKTHSPFFLKITEKPALFRSTEIMEDIDVKGTFLNTIGIEKLISLLSERGVAIKGTKADRLAIANRWDFPLAQWGRSWLLIIQSYLRKYVVLPILIILKNISRLFLLQVPEWNEDWNEWSEEIHIKCTYDGTEVSERELPEQWLRDGLQIKIIYPFHLKPWHNSKFKEKGNRNMEPNFPHTQNKGKETSDNKAYRLQKNKKFKYSFLTAWGFQTNLPFGNIKKQPSFWKPVIKELKKRWKREILSKTANFYELYYNISLLYRKSDISNRFKIFAEFDIQTDERMNHEISKIQVNSESGGASVTDDGIKRESPLGITLNSENSNFSENEDFLWEIPVESRYKTAKNIKKLESLVVSKNNLT.

6 helical membrane passes run 11-31 (ILWA…LFGL), 68-88 (TLGQ…IMLL), 92-112 (AITL…KDLS), 127-147 (GIIQ…ILLP), 166-186 (SFFV…LINL), and 212-232 (TFSI…PVPF).

It belongs to the TIC214 family. Part of the Tic complex.

Its subcellular location is the plastid. It is found in the chloroplast inner membrane. Functionally, involved in protein precursor import into chloroplasts. May be part of an intermediate translocation complex acting as a protein-conducting channel at the inner envelope. The chain is Putative protein TIC 214 N-terminal part from Anthoceros angustus (Hornwort).